The primary structure comprises 1726 residues: Protein Shroom2 (1726 aa).

The PDZ domain occupies 79-159 (AGGCYSYWRG…ILKMIVKRRN (81 aa)). Disordered stretches follow at residues 294 to 373 (DNTK…RSDS), 425 to 451 (RTVA…LSPY), 657 to 676 (FSQL…DYSW), and 697 to 785 (EGRN…STYR). The segment covering 318–328 (VLQSTSINETS) has biased composition (polar residues). Over residues 329–338 (KIQRTEDNTE) the composition is skewed to basic and acidic residues. Positions 657–667 (FSQLDHSEKGS) are enriched in basic and acidic residues. Polar residues-rich tracts occupy residues 746–755 (SKSTAALTES) and 769–785 (LESM…STYR). One can recognise an ASD1 domain in the interval 788-877 (LQEAQARVLR…SEPEKINEVG (90 aa)). Disordered regions lie at residues 913–968 (PKVP…DKVT), 1007–1080 (LDAD…QCGA), 1092–1120 (KWKP…GTLP), 1166–1240 (FKKR…KNPS), 1269–1299 (SSKS…DKPP), and 1471–1499 (AQQR…VPSA). Residues 917-926 (PKVVSSSQSE) show a composition bias toward low complexity. Over residues 936-948 (DYAKSSEGQESKR) the composition is skewed to basic and acidic residues. Composition is skewed to polar residues over residues 1054–1070 (NSNS…SPTR) and 1104–1119 (ETSN…SGTL). Positions 1191 to 1205 (SSSSLATSSESLLTA) are enriched in low complexity. Polar residues predominate over residues 1209–1235 (RAQSYSPSSQDTFPPQSLQKQSPSTYP). One can recognise an ASD2 domain in the interval 1427–1721 (EELVREIVDK…QLKCLTDSLP (295 aa)).

This sequence belongs to the shroom family. In terms of assembly, interacts with F-actin.

It is found in the apical cell membrane. The protein localises to the cell junction. Its subcellular location is the tight junction. It localises to the cytoplasm. The protein resides in the cytoskeleton. Its function is as follows. May be involved in endothelial cell morphology changes during cell spreading. Required for eye pigmentation. In the retinal pigment epithelium, regulates the biogenesis of melanosomes and promotes their association with the apical cell surface by inducing gamma-tubulin redistribution. This chain is Protein Shroom2 (shroom2), found in Xenopus tropicalis (Western clawed frog).